The sequence spans 398 residues: Na(+)/H(+) antiporter NhaA (398 aa).

The next 12 helical transmembrane spans lie at 8-28 (FLQL…LALI), 59-79 (LLLW…GMEI), 96-116 (LPVI…SFII), 124-144 (AGWA…LSLL), 154-174 (VFLL…IALF), 177-197 (AELH…LLML), 202-222 (VMLL…VLKS), 223-243 (GVHA…IRGA), 261-281 (YFIL…GLSW), 292-312 (IIVG…WLAV), 328-348 (LFGL…IGGL), and 362-382 (LGIL…LRNA).

The protein belongs to the NhaA Na(+)/H(+) (TC 2.A.33) antiporter family.

Its subcellular location is the cell inner membrane. It catalyses the reaction Na(+)(in) + 2 H(+)(out) = Na(+)(out) + 2 H(+)(in). In terms of biological role, na(+)/H(+) antiporter that extrudes sodium in exchange for external protons. This is Na(+)/H(+) antiporter NhaA from Tolumonas auensis (strain DSM 9187 / NBRC 110442 / TA 4).